The sequence spans 320 residues: o-succinylbenzoate synthase (320 aa).

Lys133 acts as the Proton donor in catalysis. Residues Asp161, Glu190, and Asp213 each contribute to the Mg(2+) site. Catalysis depends on Lys235, which acts as the Proton acceptor.

Belongs to the mandelate racemase/muconate lactonizing enzyme family. MenC type 1 subfamily. It depends on a divalent metal cation as a cofactor.

It carries out the reaction (1R,6R)-6-hydroxy-2-succinyl-cyclohexa-2,4-diene-1-carboxylate = 2-succinylbenzoate + H2O. It functions in the pathway quinol/quinone metabolism; 1,4-dihydroxy-2-naphthoate biosynthesis; 1,4-dihydroxy-2-naphthoate from chorismate: step 4/7. The protein operates within quinol/quinone metabolism; menaquinone biosynthesis. Its function is as follows. Converts 2-succinyl-6-hydroxy-2,4-cyclohexadiene-1-carboxylate (SHCHC) to 2-succinylbenzoate (OSB). This Shigella sonnei (strain Ss046) protein is o-succinylbenzoate synthase.